Here is a 1647-residue protein sequence, read N- to C-terminus: Transcription elongation factor SPT6 homolog (1647 aa).

The tract at residues 1–209 (MARNAISDDE…SKKKKYRQGS (209 aa)) is disordered. Acidic residues predominate over residues 7–20 (SDDEEDHELEDDDG). Over residues 21–30 (EPVHGDPAEH) the composition is skewed to basic and acidic residues. Residues 31 to 67 (DENDDEEDDDDVGNEYENDGFIVNDEDEEEEEEEDEE) are compositionally biased toward acidic residues. The span at 103 to 114 (KFKKRQYKRLKK) shows a compositional bias: basic residues. A compositionally biased stretch (basic and acidic residues) spans 132–151 (DSRGGTRRSAEDKIKDRLFD). Residues 152–191 (DVDVDDPPDDVGDEEDLVVEEDVVGSEDEMADFIVDEDDE) show a composition bias toward acidic residues. An S1 motif domain is found at 1103–1174 (GRIVQASVRR…QRYQVFLICK (72 aa)). Positions 1429 to 1647 (PMRSPADHGS…RKSDGGGGGW (219 aa)) are disordered. 2 consecutive repeat copies span residues 1443–1444 (GW) and 1452–1453 (GW). The segment at 1443–1647 (GWGSSQSEGG…RKSDGGGGGW (205 aa)) is 12 X 2 AA repeats of [WG]-[GW] repeats. Over residues 1462-1471 (SGRGGEYRNG) the composition is skewed to gly residues. The segment covering 1496–1507 (RRDDMNSDRQDG) has biased composition (basic and acidic residues). A run of 6 repeats spans residues 1511–1512 (WG), 1522–1523 (GW), 1530–1531 (GW), 1547–1548 (GW), 1563–1564 (WG), and 1574–1575 (GW). 4 stretches are compositionally biased toward gly residues: residues 1519–1532 (ADGGWGNSGGGGWG), 1539–1552 (KTGGGSTGGWGSES), 1561–1579 (GSWGSGSGGGGSGGWGNDS), and 1588–1600 (GGFGSGSGGGGSD). Tandem repeats lie at residues 1601–1602 (WG), 1615–1616 (GW), 1630–1631 (GW), and 1646–1647 (GW).

This sequence belongs to the SPT6 family. As to quaternary structure, interacts (via N-terminus) with IWS1. In terms of tissue distribution, expressed in shoot apical meristem, leaf primordia, vasculature of young leaves, inflorescence meristem, floral meristem, young floral organs, developing ovules and anthers.

The protein localises to the nucleus. Transcription elongation factor that enhances the transcription elongation by RNA polymerase II (RNAPII). Plays an important role in regulating embryo apical and basal patterning during early embryogenesis, partly through negative regulation of the transcription factors PHABULOSA and PHAVOLUTA. In Arabidopsis thaliana (Mouse-ear cress), this protein is Transcription elongation factor SPT6 homolog.